The chain runs to 285 residues: Malonyl-[acyl-carrier protein] O-methyltransferase (285 aa).

It belongs to the methyltransferase superfamily.

The enzyme catalyses malonyl-[ACP] + S-adenosyl-L-methionine = malonyl-[ACP] methyl ester + S-adenosyl-L-homocysteine. It participates in cofactor biosynthesis; biotin biosynthesis. In terms of biological role, converts the free carboxyl group of a malonyl-thioester to its methyl ester by transfer of a methyl group from S-adenosyl-L-methionine (SAM). It allows to synthesize pimeloyl-ACP via the fatty acid synthetic pathway. The sequence is that of Malonyl-[acyl-carrier protein] O-methyltransferase from Bacillus cytotoxicus (strain DSM 22905 / CIP 110041 / 391-98 / NVH 391-98).